Here is a 556-residue protein sequence, read N- to C-terminus: Serine beta-lactamase-like protein LACTB, mitochondrial (556 aa).

The N-terminal 117 residues, 1–117 (MYRLLSAVMA…RAIDSSRDLL (117 aa)), are a transit peptide targeting the mitochondrion. Serine 166 functions as the Acyl-ester intermediate in the catalytic mechanism. The segment covering 249–282 (ESDQEKELKEKGGKSNEKNDFAKAKVEQDNETKG) has biased composition (basic and acidic residues). The interval 249–290 (ESDQEKELKEKGGKSNEKNDFAKAKVEQDNETKGRNSKPCKK) is disordered. N6-succinyllysine is present on residues lysine 290 and lysine 291. An N6-acetyllysine mark is found at lysine 304 and lysine 349.

Belongs to the peptidase S12 family.

The protein localises to the mitochondrion. Mitochondrial serine protease that acts as a regulator of mitochondrial lipid metabolism. Acts by decreasing protein levels of PISD, a mitochondrial enzyme that converts phosphatidylserine (PtdSer) to phosphatidylethanolamine (PtdEtn), thereby affecting mitochondrial lipid metabolism. It is unclear whether it acts directly by mediating proteolysis of PISD or by mediating proteolysis of another lipid metabolism protein. The sequence is that of Serine beta-lactamase-like protein LACTB, mitochondrial from Bos taurus (Bovine).